Reading from the N-terminus, the 132-residue chain is DNA-directed RNA polymerase subunit omega (132 aa).

The protein belongs to the RNA polymerase subunit omega family. The RNAP catalytic core consists of 2 alpha, 1 beta, 1 beta' and 1 omega subunit. When a sigma factor is associated with the core the holoenzyme is formed, which can initiate transcription.

The enzyme catalyses RNA(n) + a ribonucleoside 5'-triphosphate = RNA(n+1) + diphosphate. Its function is as follows. Promotes RNA polymerase assembly. Latches the N- and C-terminal regions of the beta' subunit thereby facilitating its interaction with the beta and alpha subunits. This chain is DNA-directed RNA polymerase subunit omega, found in Ehrlichia ruminantium (strain Welgevonden).